Consider the following 181-residue polypeptide: ATP synthase subunit delta (181 aa).

It belongs to the ATPase delta chain family. F-type ATPases have 2 components, F(1) - the catalytic core - and F(0) - the membrane proton channel. F(1) has five subunits: alpha(3), beta(3), gamma(1), delta(1), epsilon(1). F(0) has three main subunits: a(1), b(2) and c(10-14). The alpha and beta chains form an alternating ring which encloses part of the gamma chain. F(1) is attached to F(0) by a central stalk formed by the gamma and epsilon chains, while a peripheral stalk is formed by the delta and b chains.

The protein resides in the cell inner membrane. Its function is as follows. F(1)F(0) ATP synthase produces ATP from ADP in the presence of a proton or sodium gradient. F-type ATPases consist of two structural domains, F(1) containing the extramembraneous catalytic core and F(0) containing the membrane proton channel, linked together by a central stalk and a peripheral stalk. During catalysis, ATP synthesis in the catalytic domain of F(1) is coupled via a rotary mechanism of the central stalk subunits to proton translocation. This protein is part of the stalk that links CF(0) to CF(1). It either transmits conformational changes from CF(0) to CF(1) or is implicated in proton conduction. The protein is ATP synthase subunit delta of Chlorobium phaeobacteroides (strain DSM 266 / SMG 266 / 2430).